Consider the following 103-residue polypeptide: N(4)-acetylcytidine amidohydrolase (103 aa).

The 87-residue stretch at 6-92 (TFFERFEPGI…VIQEIYPGLE (87 aa)) folds into the ASCH domain. Lys20 acts as the Proton acceptor in catalysis. The Nucleophile role is filled by Thr23. The Proton donor role is filled by Glu73.

It belongs to the N(4)-acetylcytidine amidohydrolase family.

The enzyme catalyses N(4)-acetylcytidine + H2O = cytidine + acetate + H(+). It catalyses the reaction N(4)-acetyl-2'-deoxycytidine + H2O = 2'-deoxycytidine + acetate + H(+). It carries out the reaction N(4)-acetylcytosine + H2O = cytosine + acetate + H(+). Its function is as follows. Catalyzes the hydrolysis of N(4)-acetylcytidine (ac4C). This Shewanella sp. (strain MR-7) protein is N(4)-acetylcytidine amidohydrolase.